A 772-amino-acid polypeptide reads, in one-letter code: Phosphatidylinositol 4-phosphate 5-kinase 5 (772 aa).

The tract at residues 22 to 56 is disordered; sequence AKKRANSVFGTVSVAPHTDNDTTTDDNDDETTTNR. Positions 43-52 are enriched in acidic residues; it reads TTTDDNDDET. 8 MORN repeats span residues 75–97, 98–120, 121–143, 144–166, 167–189, 190–212, 213–235, and 236–257; these read YTGQWYDSFPHGHGKYLWTDGCM, YIGDWYNGKTMGNGKFGWPSGAT, YEGEFKSGYMDGIGTYTGPSGDA, YKGQWVMNLKHGHGVKSFANGDA, YDGEWRRGLQEGQGKYQWSDGSY, YIGEWKNGTICGKGSFVWTNGNR, YDGFWDEGFPRGNGTFKWDNGSF, and YVGHWSKDPEEMNGTYYPSGNE. The PIPK domain maps to 377–768; the sequence is SKGHRNYELM…RFRDFIFKVF (392 aa). The disordered stretch occupies residues 646-665; that stretch reads SGARTPIGESEEESGPRLSR. The activation loop stretch occupies residues 728–749; sequence YDISKKLEHAYKSIQYDPSSIS.

The catalysed reaction is a 1,2-diacyl-sn-glycero-3-phospho-(1D-myo-inositol 4-phosphate) + ATP = a 1,2-diacyl-sn-glycero-3-phospho-(1D-myo-inositol-4,5-bisphosphate) + ADP + H(+). This is Phosphatidylinositol 4-phosphate 5-kinase 5 (PIP5K5) from Arabidopsis thaliana (Mouse-ear cress).